A 579-amino-acid polypeptide reads, in one-letter code: UvrABC system protein C (579 aa).

The GIY-YIG domain maps to 12-89 (DATGVYIFRD…IKRYRPPYNV (78 aa)). The UVR domain maps to 193–228 (QEVIEVLEEEMKEASERLEFERAARIRDQIESIREV).

Belongs to the UvrC family. In terms of assembly, interacts with UvrB in an incision complex.

The protein resides in the cytoplasm. Its function is as follows. The UvrABC repair system catalyzes the recognition and processing of DNA lesions. UvrC both incises the 5' and 3' sides of the lesion. The N-terminal half is responsible for the 3' incision and the C-terminal half is responsible for the 5' incision. This Methanothermobacter thermautotrophicus (strain ATCC 29096 / DSM 1053 / JCM 10044 / NBRC 100330 / Delta H) (Methanobacterium thermoautotrophicum) protein is UvrABC system protein C.